Consider the following 786-residue polypeptide: Pentatricopeptide repeat-containing protein 10, chloroplastic (786 aa).

The interval 1–71 (MEATGRGLFP…HQTPTPPHSF (71 aa)) is disordered. A chloroplast-targeting transit peptide spans 1 to 95 (MEATGRGLFP…HPLPTLAAFL (95 aa)). Residues 27–36 (PAAPPPPSPS) are compositionally biased toward pro residues. A compositionally biased stretch (low complexity) spans 37-50 (SLPLDSLLLHLTAP). PPR repeat units follow at residues 137-167 (DASA…TPLP), 173-207 (DVRA…GVAP), 208-243 (TLVT…GVEP), 244-278 (DGFT…GHAP), 279-313 (CVVT…GCQP), 314-348 (DAVT…GLLP), 349-383 (NAFT…GFVP), 384-418 (NVNT…GCTP), 419-453 (NRVT…GVEL), 454-488 (SRDT…GFTP), 489-523 (CITT…GFKP), 524-558 (NEQS…GAVF), 560-594 (SWVI…GYNP), 595-629 (DLVI…GLSP), 630-664 (DLIT…QTMK), 666-700 (DVVS…GMAP), 701-735 (CAVT…GLKP), and 736-770 (MELT…DLDF).

The protein belongs to the PPR family. P subfamily. As to quaternary structure, forms homodimers.

It is found in the plastid. The protein resides in the chloroplast stroma. Involved in chloroplast mRNA stability. Binds specifically to two intergenic RNA regions of similar sequence located in the chloroplast atpH 5'-UTR and psaJ 3'-UTR, and serves as a barrier to RNA decay. Binding to a specific site in the intergenic region of the chloroplast atpH is sufficient to block 5'-3' and 3'-5' exonucleases. Acts as a protein barrier to block mRNA degradation by exonucleases, and defines processed mRNA termini in chloroplasts. Remodels the structure of the atpH ribosome-binding site in a manner that can account for its ability to enhance translation. Stabilizes a RNA 3'-end downstream from psaI. Binds atpH RNA as a monomer. This is Pentatricopeptide repeat-containing protein 10, chloroplastic from Zea mays (Maize).